A 295-amino-acid polypeptide reads, in one-letter code: ATP synthase gamma chain (295 aa).

This sequence belongs to the ATPase gamma chain family. As to quaternary structure, F-type ATPases have 2 components, CF(1) - the catalytic core - and CF(0) - the membrane proton channel. CF(1) has five subunits: alpha(3), beta(3), gamma(1), delta(1), epsilon(1). CF(0) has three main subunits: a, b and c.

The protein resides in the cell inner membrane. Its function is as follows. Produces ATP from ADP in the presence of a proton gradient across the membrane. The gamma chain is believed to be important in regulating ATPase activity and the flow of protons through the CF(0) complex. In Campylobacter concisus (strain 13826), this protein is ATP synthase gamma chain.